A 306-amino-acid chain; its full sequence is Small ribosomal subunit biogenesis GTPase RsgA (306 aa).

The CP-type G domain maps to 77 to 236; it reads KNELKRPNVA…IVDTPGFSKL (160 aa). GTP-binding positions include 126 to 129 and 179 to 187; these read SKID and GQTGVGKST. Zn(2+) contacts are provided by Cys-260, Cys-266, His-268, and Cys-274.

It belongs to the TRAFAC class YlqF/YawG GTPase family. RsgA subfamily. As to quaternary structure, monomer. Associates with 30S ribosomal subunit, binds 16S rRNA. Requires Zn(2+) as cofactor.

Its subcellular location is the cytoplasm. In terms of biological role, one of several proteins that assist in the late maturation steps of the functional core of the 30S ribosomal subunit. Helps release RbfA from mature subunits. May play a role in the assembly of ribosomal proteins into the subunit. Circularly permuted GTPase that catalyzes slow GTP hydrolysis, GTPase activity is stimulated by the 30S ribosomal subunit. This Onion yellows phytoplasma (strain OY-M) protein is Small ribosomal subunit biogenesis GTPase RsgA.